The sequence spans 425 residues: MNSASTHKNTDFWIFGLFFFLYFFIMATCFPFLPVWLSDVVGLSKTDTGIVFSCLSLFAISFQPLLGVISDRLGLKKNLIWSISLLLVFFAPFFLYVFAPLLHLNIWAGALTGGVFIGFVFSAGAGAIEAYIERVSRSSGFEYGKARMFGCLGWALCATMAGILFNVDPSLVFWMGSGGALLLLLLLYLARPSTSQTAMVMNALGANSSLISTRMVFSLFRMRQMWMFVLYTIGVACVYDVFDQQFAIFFRSFFDTPQAGIKAFGFATTAGEICNAIIMFCTPWIINRIGAKNTLLVAGGIMTIRITGSAFATTMTEVVILKMLHALEVPFLLVGAFKYITGVFDTRLSATVYLIGFQFSKQLAAILLSTFAGHLYDRMGFQNTYFVLGMIVLTVTVISAFTLSSSPGIVHPSVEKAPVAHSEIN.

Topologically, residues 1 to 11 (MNSASTHKNTD) are cytoplasmic. A helical transmembrane segment spans residues 12–32 (FWIFGLFFFLYFFIMATCFPF). The Periplasmic portion of the chain corresponds to 33–48 (LPVWLSDVVGLSKTDT). Residues 49–69 (GIVFSCLSLFAISFQPLLGVI) traverse the membrane as a helical segment. The Cytoplasmic portion of the chain corresponds to 70-78 (SDRLGLKKN). A helical transmembrane segment spans residues 79-99 (LIWSISLLLVFFAPFFLYVFA). At 100 to 105 (PLLHLN) the chain is on the periplasmic side. Residues 106–126 (IWAGALTGGVFIGFVFSAGAG) traverse the membrane as a helical segment. Residues 127 to 147 (AIEAYIERVSRSSGFEYGKAR) are Cytoplasmic-facing. A helical membrane pass occupies residues 148–168 (MFGCLGWALCATMAGILFNVD). A topological domain (periplasmic) is located at residue Pro-169. Residues 170–190 (SLVFWMGSGGALLLLLLLYLA) form a helical membrane-spanning segment. At 191 to 229 (RPSTSQTAMVMNALGANSSLISTRMVFSLFRMRQMWMFV) the chain is on the cytoplasmic side. Residues 230 to 250 (LYTIGVACVYDVFDQQFAIFF) form a helical membrane-spanning segment. Residues 251 to 265 (RSFFDTPQAGIKAFG) are Periplasmic-facing. Residues 266-286 (FATTAGEICNAIIMFCTPWII) form a helical membrane-spanning segment. Residues 287–294 (NRIGAKNT) are Cytoplasmic-facing. Residues 295–315 (LLVAGGIMTIRITGSAFATTM) traverse the membrane as a helical segment. Residue Thr-316 is a topological domain, periplasmic. The helical transmembrane segment at 317-337 (EVVILKMLHALEVPFLLVGAF) threads the bilayer. Residues 338–351 (KYITGVFDTRLSAT) lie on the Cytoplasmic side of the membrane. The helical transmembrane segment at 352-372 (VYLIGFQFSKQLAAILLSTFA) threads the bilayer. Over 373–383 (GHLYDRMGFQN) the chain is Periplasmic. Residues 384–404 (TYFVLGMIVLTVTVISAFTLS) traverse the membrane as a helical segment. Over 405 to 425 (SSPGIVHPSVEKAPVAHSEIN) the chain is Cytoplasmic.

It belongs to the major facilitator superfamily. Oligosaccharide:H(+) symporter (OHS) (TC 2.A.1.5) family. Monomer.

The protein localises to the cell inner membrane. Responsible for transport of raffinose into the cell. Can also transport lactose and melibiose. Has weak activity with maltose. This chain is Raffinose permease, found in Escherichia coli.